The chain runs to 762 residues: MAEDNSWKTSNFRQSVVNKINEAIQQTGMTSSKNGIEMENHVFHKARNKDEYLGFVARLILHVREMTAAAQQAQQDGGGNSSQQGGGGGGGGSGMPDPINALQNLASQGTRPQMMGQMGVGPGGPMGGQMGGAGQASNLLHSLRPQMQMGGMGGPMQGNRVGMGPGNQMGGMMGGPNQMQGPGAGMVGGMPGQMGVGMGPGGMSGGKIQMGVGPGGPNQMNPMVMGQIQAQLQNQNAMGGQQMGTVGGTMNAGNQMGQMVGANAGMNPQAMGMASNQVVRQQQLQQQGMGQVQMGLGPGQMGQLSAGVQGGVGHGGPAMQQQQQAGGMGPGAGPNQMNPGVAMGPGGVVGPAGGGGVMGPGPNQMLGAGGAGGPGAGQQGNFVGMGANAMVRKPPEMMPGGNVYPGSGGAVRSVTPNNFLRQSPSPSVPSPVGPGAHGPPSHPGQMIPSPALIPSPNPHMGGVAQRSTIGQSPGGSLNTPGQPGGAVPSPLNPQDEQLYREKYRALTKYIEPLKRMIAKMENDDIDKIAKMKRLLEILSNPSVRIPLETLHKCEAALTSQLGSIRETPTNNPLVEAVSSSLQAATGNHTLQRTFRPCLEALFGPDIKNLPPPAKQSRLALDDTGAAVGTGGGEIPHILQGEIARLDQKFKVSLDQCAISGTRTIKLICWLDDKNLPCVPPVAVTIPEDYPSTAPSCSLIEQEYNATPFLILVQKSLMARICKLPGLFTLSHLLDTWEMSVRQACSPNPTIVAPTGTSVLLGM.

Disordered regions lie at residues Ala70–Leu102, Gly311–Pro330, and Gly406–Gln494. Positions Asp76–Gly94 are enriched in gly residues. Polar residues predominate over residues Gln465–Gly481.

This sequence belongs to the Mediator complex subunit 15 family. In terms of assembly, component of the Mediator complex.

The protein localises to the nucleus. Its function is as follows. Component of the Mediator complex, a coactivator involved in the regulated transcription of nearly all RNA polymerase II-dependent genes. Mediator functions as a bridge to convey information from gene-specific regulatory proteins to the basal RNA polymerase II transcription machinery. Mediator is recruited to promoters by direct interactions with regulatory proteins and serves as a scaffold for the assembly of a functional preinitiation complex with RNA polymerase II and the general transcription factors. The polypeptide is Mediator of RNA polymerase II transcription subunit 15 (MED15) (Anopheles gambiae (African malaria mosquito)).